Reading from the N-terminus, the 185-residue chain is Probable chorismate pyruvate-lyase (185 aa).

The substrate site is built by Arg-75, Leu-113, and Glu-170.

The protein belongs to the UbiC family.

Its subcellular location is the cytoplasm. It catalyses the reaction chorismate = 4-hydroxybenzoate + pyruvate. Its pathway is cofactor biosynthesis; ubiquinone biosynthesis. In terms of biological role, removes the pyruvyl group from chorismate, with concomitant aromatization of the ring, to provide 4-hydroxybenzoate (4HB) for the ubiquinone pathway. The chain is Probable chorismate pyruvate-lyase from Coxiella burnetii (strain RSA 493 / Nine Mile phase I).